The chain runs to 320 residues: ATP-dependent 6-phosphofructokinase (320 aa).

Glycine 12 serves as a coordination point for ATP. ADP is bound by residues 22-26 (RGVVR) and 55-60 (RYSVSD). Residues 73–74 (RF) and 103–106 (GDGS) each bind ATP. Mg(2+) is bound at residue aspartate 104. Residue 126–128 (TID) participates in substrate binding. Aspartate 128 (proton acceptor) is an active-site residue. An ADP-binding site is contributed by arginine 155. Residues arginine 163 and 170–172 (MGR) contribute to the substrate site. ADP-binding positions include 186 to 188 (GCE), lysine 212, and 214 to 216 (KKH). Substrate contacts are provided by residues glutamate 223, arginine 244, and 250-253 (HIQR).

It belongs to the phosphofructokinase type A (PFKA) family. ATP-dependent PFK group I subfamily. Prokaryotic clade 'B1' sub-subfamily. As to quaternary structure, homotetramer. It depends on Mg(2+) as a cofactor.

The protein localises to the cytoplasm. The catalysed reaction is beta-D-fructose 6-phosphate + ATP = beta-D-fructose 1,6-bisphosphate + ADP + H(+). The protein operates within carbohydrate degradation; glycolysis; D-glyceraldehyde 3-phosphate and glycerone phosphate from D-glucose: step 3/4. Its activity is regulated as follows. Allosterically activated by ADP and other diphosphonucleosides, and allosterically inhibited by phosphoenolpyruvate. Functionally, catalyzes the phosphorylation of D-fructose 6-phosphate to fructose 1,6-bisphosphate by ATP, the first committing step of glycolysis. The chain is ATP-dependent 6-phosphofructokinase from Escherichia fergusonii (strain ATCC 35469 / DSM 13698 / CCUG 18766 / IAM 14443 / JCM 21226 / LMG 7866 / NBRC 102419 / NCTC 12128 / CDC 0568-73).